The sequence spans 230 residues: ATP synthase subunit a (230 aa).

6 helical membrane passes run 26–46 (ANAVVYTWTVIVLLLVLSLIA), 83–103 (FFPLIATLAIFILVSNLVGLI), 112–132 (NVNTTAACAIVVFLATHVVGI), 143–163 (FMGPIWWLAPLMFFIEVIGHL), 182–202 (LVLMIFFALAPFLVPLPMMLM), and 203–223 (GVLVSFIQAFVFMLLAMIYIQ).

The protein belongs to the ATPase A chain family. In terms of assembly, F-type ATPases have 2 components, CF(1) - the catalytic core - and CF(0) - the membrane proton channel. CF(1) has five subunits: alpha(3), beta(3), gamma(1), delta(1), epsilon(1). CF(0) has three main subunits: a(1), b(2) and c(9-12). The alpha and beta chains form an alternating ring which encloses part of the gamma chain. CF(1) is attached to CF(0) by a central stalk formed by the gamma and epsilon chains, while a peripheral stalk is formed by the delta and b chains.

Its subcellular location is the cell inner membrane. Functionally, key component of the proton channel; it plays a direct role in the translocation of protons across the membrane. The chain is ATP synthase subunit a from Trichlorobacter lovleyi (strain ATCC BAA-1151 / DSM 17278 / SZ) (Geobacter lovleyi).